Reading from the N-terminus, the 128-residue chain is SH2 domain-containing protein 1A (128 aa).

Residues 6-102 (VYHGKISRET…GIVIPLQYPV (97 aa)) enclose the SH2 domain. Residues 67–92 (ETAPGVHKRYFRKIKNLISAFQKPDQ) are interaction with FYN SH3 domain. Position 89 is an N6-acetyllysine (K89). The interval 106 to 128 (SSARSTQGTTGIREDPDVCLKAP) is disordered. A compositionally biased stretch (basic and acidic residues) spans 117-128 (IREDPDVCLKAP).

Interacts with CD84, CD244, LY9, SLAMF1 and FYN. Interacts with NTRK1, NTRK2 and NTRK3.

Its subcellular location is the cytoplasm. Its function is as follows. Cytoplasmic adapter regulating receptors of the signaling lymphocytic activation molecule (SLAM) family such as SLAMF1, CD244, LY9, CD84, SLAMF6 and SLAMF7. In SLAM signaling seems to cooperate with SH2D1B/EAT-2. Initially it has been proposed that association with SLAMF1 prevents SLAMF1 binding to inhibitory effectors including INPP5D/SHIP1 and PTPN11/SHP-2. However, by simultaneous interactions, recruits FYN which subsequently phosphorylates and activates SLAMF1. Positively regulates CD244/2B4- and CD84-mediated natural killer (NK) cell functions. Can also promote CD48-, SLAMF6 -, LY9-, and SLAMF7-mediated NK cell activation. In the context of NK cell-mediated cytotoxicity enhances conjugate formation with target cells. May also regulate the activity of the neurotrophin receptors NTRK1, NTRK2 and NTRK3. The chain is SH2 domain-containing protein 1A (SH2D1A) from Macaca mulatta (Rhesus macaque).